A 1171-amino-acid polypeptide reads, in one-letter code: DExH-box ATP-dependent RNA helicase DExH15 chloroplastic (1171 aa).

The transit peptide at methionine 1–serine 58 directs the protein to the chloroplast. Positions asparagine 53–leucine 62 are enriched in polar residues. The interval asparagine 53–leucine 111 is disordered. Acidic residues-rich tracts occupy residues tyrosine 63–serine 90 and aspartate 97–phenylalanine 107. Positions isoleucine 163 to glutamate 327 constitute a Helicase ATP-binding domain. An ATP-binding site is contributed by alanine 176–threonine 183. Positions aspartate 275–histidine 278 match the DEVH box motif. The Helicase C-terminal domain maps to glutamine 424–valine 620.

Belongs to the DExH box helicase family.

It localises to the plastid. The protein localises to the chloroplast. Its subcellular location is the cytoplasmic granule. It carries out the reaction ATP + H2O = ADP + phosphate + H(+). In terms of biological role, RNA helicase involved in group II intron splicing. Essential protein required during embryogenesis. Involved in post-transcriptional gene silencing. Modulates the determination of cell fate. Necessary for normal plasmodesmata (PD) development and aperture regulation. In Arabidopsis thaliana (Mouse-ear cress), this protein is DExH-box ATP-dependent RNA helicase DExH15 chloroplastic (ISE2).